A 558-amino-acid chain; its full sequence is Formate--tetrahydrofolate ligase (558 aa).

66 to 73 is a binding site for ATP; sequence TPAGEGKT.

Belongs to the formate--tetrahydrofolate ligase family.

It catalyses the reaction (6S)-5,6,7,8-tetrahydrofolate + formate + ATP = (6R)-10-formyltetrahydrofolate + ADP + phosphate. The protein operates within one-carbon metabolism; tetrahydrofolate interconversion. This chain is Formate--tetrahydrofolate ligase, found in Neisseria meningitidis serogroup B (strain ATCC BAA-335 / MC58).